Here is a 302-residue protein sequence, read N- to C-terminus: Sulfate adenylyltransferase subunit 2 (302 aa).

This sequence belongs to the PAPS reductase family. CysD subfamily. Heterodimer composed of CysD, the smaller subunit, and CysN.

The enzyme catalyses sulfate + ATP + H(+) = adenosine 5'-phosphosulfate + diphosphate. Its pathway is sulfur metabolism; hydrogen sulfide biosynthesis; sulfite from sulfate: step 1/3. Its function is as follows. With CysN forms the ATP sulfurylase (ATPS) that catalyzes the adenylation of sulfate producing adenosine 5'-phosphosulfate (APS) and diphosphate, the first enzymatic step in sulfur assimilation pathway. APS synthesis involves the formation of a high-energy phosphoric-sulfuric acid anhydride bond driven by GTP hydrolysis by CysN coupled to ATP hydrolysis by CysD. The sequence is that of Sulfate adenylyltransferase subunit 2 from Buchnera aphidicola subsp. Acyrthosiphon pisum (strain 5A).